Here is an 83-residue protein sequence, read N- to C-terminus: Small ribosomal subunit protein bS21 (83 aa).

The disordered stretch occupies residues 40–83 (TPMDERRRKARSASKRNKVKWRYSNKSEETASETAETPASAPEA). Over residues 47–62 (RKARSASKRNKVKWRY) the composition is skewed to basic residues. A compositionally biased stretch (low complexity) spans 71-83 (SETAETPASAPEA).

It belongs to the bacterial ribosomal protein bS21 family.

The protein is Small ribosomal subunit protein bS21 of Akkermansia muciniphila (strain ATCC BAA-835 / DSM 22959 / JCM 33894 / BCRC 81048 / CCUG 64013 / CIP 107961 / Muc).